Reading from the N-terminus, the 460-residue chain is Cysteine--tRNA ligase (460 aa).

Cysteine 29 serves as a coordination point for Zn(2+). Residues 31–41 (PTVYDFAHIGN) carry the 'HIGH' region motif. Zn(2+)-binding residues include cysteine 227, histidine 252, and glutamate 256. Residues 285-289 (KMSKS) carry the 'KMSKS' region motif. Lysine 288 contacts ATP.

The protein belongs to the class-I aminoacyl-tRNA synthetase family. In terms of assembly, monomer. Zn(2+) serves as cofactor.

Its subcellular location is the cytoplasm. The enzyme catalyses tRNA(Cys) + L-cysteine + ATP = L-cysteinyl-tRNA(Cys) + AMP + diphosphate. The polypeptide is Cysteine--tRNA ligase (Bradyrhizobium diazoefficiens (strain JCM 10833 / BCRC 13528 / IAM 13628 / NBRC 14792 / USDA 110)).